The chain runs to 594 residues: MSENYRAPIVVVVGHVDVGKTLLLDKIRNTMVAYREPGMITQHIGLSYLPWPIIEKYAAPVIERYRLKGKVWVKGFLMVDTPGHAAFSNLRRRGGSVADLAILVIDLTRGFEEQTYESLILLKSRNIPFVVAANKVDRIYGWKPIPNASILDSYNAQDEETQGRLEEALANIIMDFNKQGFEAERFDRITDFSRQVPIVPTSAVTGEGIPDLLVLMAGLTQRLVKDRLRLVGGPGKGVVMEVKEEKGLGTTMDVVLYDGVMRKGDTIVAMGLNGPVVTRIRMMVMPKPLDEMRDPEDKYMHINEVEAAAGVKVIADGLDDVVPGSSVYVVQGDPKPYIDEVVKDAASVKIETDQIGVVAKADTLGTLEAMVLYLRSQGIPVRKADIGPVTRRDIIDASVVRRKNPLYGVVLAFNVKVPKEVEEEAKVQLVTIFQNNILYRLVEEFTKWFNEEKSRLIESELSKYVRPGKIAIIPGYVFRRSDPAIVGVEVLGGLIKPGYRLVKANGKEVGVIMQIQDKGKPIQVAKKGMSVAISIEGNVIVGRHIKEGDVLYVNVPLEHAVKLIMQYKDHLSSDEVEVLEEFMKLRSTWKAQAQ.

The tr-type G domain maps to 5–224 (YRAPIVVVVG…LMAGLTQRLV (220 aa)). Positions 14–21 (GHVDVGKT) are G1. 14-21 (GHVDVGKT) provides a ligand contact to GTP. A G2 region spans residues 39–43 (MITQH). The segment at 80-83 (DTPG) is G3. GTP-binding positions include 80-84 (DTPGH) and 134-137 (NKVD). The G4 stretch occupies residues 134 to 137 (NKVD). Residues 202-204 (SAV) form a G5 region.

This sequence belongs to the TRAFAC class translation factor GTPase superfamily. Classic translation factor GTPase family. IF-2 subfamily.

Functionally, function in general translation initiation by promoting the binding of the formylmethionine-tRNA to ribosomes. Seems to function along with eIF-2. In Caldivirga maquilingensis (strain ATCC 700844 / DSM 13496 / JCM 10307 / IC-167), this protein is Probable translation initiation factor IF-2.